A 689-amino-acid chain; its full sequence is Solute carrier organic anion transporter family member 1B2 (689 aa).

Residues 1 to 26 (MDQTQHPSKAAQPLRSEKTRHCDGFR) are Cytoplasmic-facing. A helical membrane pass occupies residues 27–46 (IFLAALSFSYICKALGGVIM). The Extracellular segment spans residues 47-65 (KSSITQIERRFDIPSSISG). Residues 66 to 86 (LIDGGFEIGNLLVIVFVSYFG) form a helical membrane-spanning segment. Residues 87–92 (SKLHRP) lie on the Cytoplasmic side of the membrane. A helical membrane pass occupies residues 93 to 117 (KLIGTGCFIMGIGSILTALPHFFMG). Residues 118–163 (YYRYATENDISSLHNSTLTCLVNQTTSLTGTSPEIMEKGCEKGSNS) are Extracellular-facing. 2 N-linked (GlcNAc...) asparagine glycosylation sites follow: Asn132 and Asn140. A helical transmembrane segment spans residues 164-192 (YTWIYVLMGNMLRGIGETPIVPLGVSYID). The Cytoplasmic segment spans residues 193-211 (DFAKEGNSSMYLGTLHTIA). The helical transmembrane segment at 212–232 (MIGPILGFIMSSVFAKLYVDV) threads the bilayer. Over 233 to 250 (GYVDLRSVRITPQDARWV) the chain is Extracellular. The helical transmembrane segment at 251–275 (GAWWLGFIVNGLLCIICSIPFFFLP) threads the bilayer. Residues 276-326 (KIPKRSQKERKNSASLHVLKTDEDKNPVTNPTTQEKQAPANLTGFLWSLRS) are Cytoplasmic-facing. A phosphoserine mark is found at Ser288 and Ser290. A helical membrane pass occupies residues 327-348 (ILTNEQYVIFLILTLLQISSFI). The Extracellular segment spans residues 349–368 (GSFTYLFKFIEQQFGQTASQ). Residues 369–392 (ANFLLGVITIPTMASGMFLGGYLI) form a helical membrane-spanning segment. The Cytoplasmic portion of the chain corresponds to 393 to 396 (KRLK). Residues 397 to 420 (LTLLGITKFVFFTTTMAYVFYLSY) traverse the membrane as a helical segment. The Extracellular segment spans residues 421–533 (FLLICENKAF…DKCKTKYYFY (113 aa)). The Kazal-like domain occupies 448 to 505 (DVPLSYCNSDCICDKNQWEPVCGENGVTYISPCLAGCKSFRGDKKLMNIEFYDCSCVS). Intrachain disulfides connect Cys454–Cys484, Cys460–Cys480, and Cys469–Cys503. Asn513 carries an N-linked (GlcNAc...) asparagine glycan. The helical transmembrane segment at 534 to 556 (ITFQVIISFFTALGSTSLMLILI) threads the bilayer. Topologically, residues 557-565 (RSVQPELKS) are cytoplasmic. The helical transmembrane segment at 566-591 (LGMGFHSLVVRTLGGILAPVYYGALI) threads the bilayer. Topologically, residues 592-625 (DRTCMKWSVTSCGARGACRLYNSRLFGMIYVGLS) are extracellular. A helical transmembrane segment spans residues 626–643 (IALKTPILLLYVALIYVM). Over 644 to 689 (KRKMKRNDNKILENGRKFTDEGNPEPVNNNGYSCVPSDEKNSETPL) the chain is Cytoplasmic. The disordered stretch occupies residues 658–689 (GRKFTDEGNPEPVNNNGYSCVPSDEKNSETPL). Residue Thr662 is modified to Phosphothreonine. A Phosphoserine modification is found at Ser680. Over residues 680 to 689 (SDEKNSETPL) the composition is skewed to basic and acidic residues.

The protein belongs to the organo anion transporter (TC 2.A.60) family. As to expression, liver specific.

It localises to the cell membrane. The enzyme catalyses estrone 3-sulfate(out) = estrone 3-sulfate(in). The catalysed reaction is taurocholate(out) = taurocholate(in). It catalyses the reaction prostaglandin E2(out) = prostaglandin E2(in). It carries out the reaction L-thyroxine(out) = L-thyroxine(in). Mediates the Na(+)-independent uptake of organic anions such as taurochlate, bromosulfophthalein and steroid conjugates (estrone 3-sulfate, 17-beta-glucuronosyl estradiol, dehydroepiandrosterone sulfate). Also transports prostaglandin E2 and L-thyroxine (T4). Shows a pH-sensitive substrate specificity which may be ascribed to the protonation state of the binding site and leads to a stimulation of substrate transport in an acidic microenvironment. Hydrogencarbonate/HCO3(-) acts as the probable counteranion that exchanges for organic anions. The sequence is that of Solute carrier organic anion transporter family member 1B2 (Slco1b2) from Mus musculus (Mouse).